Consider the following 129-residue polypeptide: Protein yippee-like (129 aa).

A Yippee domain is found at 12–109; that stretch reads KIYSCKHCGT…LERFKITGPD (98 aa). The Zn(2+) site is built by Cys-16, Cys-19, Cys-72, and Cys-75.

The protein belongs to the yippee family.

This is Protein yippee-like from Solanum tuberosum (Potato).